The chain runs to 448 residues: Ribulose bisphosphate carboxylase large chain (448 aa).

Positions 1–2 (MS) are excised as a propeptide. Position 3 is an N-acetylproline (P3). Residue K14 is modified to N6,N6,N6-trimethyllysine. Positions 122 and 172 each coordinate substrate. The active-site Proton acceptor is K174. K176 is a binding site for substrate. K200, D202, and E203 together coordinate Mg(2+). The residue at position 200 (K200) is an N6-carboxylysine. Catalysis depends on H293, which acts as the Proton acceptor. Substrate is bound by residues R294, H326, and S378.

Belongs to the RuBisCO large chain family. Type I subfamily. As to quaternary structure, heterohexadecamer of 8 large chains and 8 small chains; disulfide-linked. The disulfide link is formed within the large subunit homodimers. Mg(2+) is required as a cofactor. Post-translationally, the disulfide bond which can form in the large chain dimeric partners within the hexadecamer appears to be associated with oxidative stress and protein turnover.

The protein localises to the plastid. It localises to the chloroplast. It catalyses the reaction 2 (2R)-3-phosphoglycerate + 2 H(+) = D-ribulose 1,5-bisphosphate + CO2 + H2O. It carries out the reaction D-ribulose 1,5-bisphosphate + O2 = 2-phosphoglycolate + (2R)-3-phosphoglycerate + 2 H(+). RuBisCO catalyzes two reactions: the carboxylation of D-ribulose 1,5-bisphosphate, the primary event in carbon dioxide fixation, as well as the oxidative fragmentation of the pentose substrate in the photorespiration process. Both reactions occur simultaneously and in competition at the same active site. The chain is Ribulose bisphosphate carboxylase large chain from Dichapetalum crassifolium.